A 258-amino-acid polypeptide reads, in one-letter code: Thrombin-like enzyme ancrod-2 (258 aa).

An N-terminal signal peptide occupies residues 1–18 (MVLIRVLANLVILQLSYA). A propeptide spanning residues 19–24 (QKSSEL) is cleaved from the precursor. A Peptidase S1 domain is found at 25 to 251 (VIGGDECNIN…HLHWILSIMA (227 aa)). Cystine bridges form between cysteine 31-cysteine 165, cysteine 52-cysteine 68, cysteine 102-cysteine 256, cysteine 144-cysteine 212, cysteine 176-cysteine 191, and cysteine 202-cysteine 227. Catalysis depends on charge relay system residues histidine 67 and aspartate 112. Residues asparagine 123 and asparagine 172 are each glycosylated (N-linked (GlcNAc...) asparagine). The active-site Charge relay system is the serine 206. A glycan (N-linked (GlcNAc...) asparagine) is linked at asparagine 253.

The protein belongs to the peptidase S1 family. Snake venom subfamily. Monomer. In terms of tissue distribution, expressed by the venom gland.

It localises to the secreted. It carries out the reaction Selective cleavage of Arg-|-Xaa bond in fibrinogen, to form fibrin, and release fibrinopeptide A. The specificity of further degradation of fibrinogen varies with species origin of the enzyme.. In terms of biological role, thrombin-like snake venom serine protease. Cleaves fibrinogen (FGA) to split of fibrinopeptides AM, AO, and AY; the aberrant fibrinogen is then incapable of being cross-linked, forming easily dispersible clots. This Calloselasma rhodostoma (Malayan pit viper) protein is Thrombin-like enzyme ancrod-2.